Consider the following 216-residue polypeptide: CDP-diacylglycerol--glycerol-3-phosphate 3-phosphatidyltransferase (216 aa).

The next 4 helical transmembrane spans lie at 40 to 60 (VVSI…FLDG), 88 to 108 (VMLC…CILY), 141 to 161 (MGAV…LAGA), and 176 to 196 (VVPV…FFPI).

It belongs to the CDP-alcohol phosphatidyltransferase class-I family.

The protein resides in the cell membrane. It catalyses the reaction a CDP-1,2-diacyl-sn-glycerol + sn-glycerol 3-phosphate = a 1,2-diacyl-sn-glycero-3-phospho-(1'-sn-glycero-3'-phosphate) + CMP + H(+). It functions in the pathway phospholipid metabolism; phosphatidylglycerol biosynthesis; phosphatidylglycerol from CDP-diacylglycerol: step 1/2. Its function is as follows. This protein catalyzes the committed step to the synthesis of the acidic phospholipids. The polypeptide is CDP-diacylglycerol--glycerol-3-phosphate 3-phosphatidyltransferase (pgsA) (Treponema pallidum (strain Nichols)).